We begin with the raw amino-acid sequence, 1441 residues long: Tripeptidyl-peptidase 2 (1441 aa).

The segment at 62–89 (AESSERSNSSKKTTNKEQSDKSAESRMA) is disordered. Residues 75–85 (TNKEQSDKSAE) are compositionally biased toward basic and acidic residues. The Peptidase S8 domain occupies 107-608 (ETGVLNFLQK…HGLLNVEKAF (502 aa)). Residues aspartate 131, histidine 359, and serine 549 each act as charge relay system in the active site. The segment covering 1139–1155 (TANGAKPKAPATPQAAT) has biased composition (low complexity). 2 disordered regions span residues 1139–1190 (TANG…KANA) and 1255–1274 (QKTSPPEAGESADKQKEDQK). Serine 1182 bears the Phosphoserine mark. The segment covering 1265-1274 (SADKQKEDQK) has biased composition (basic and acidic residues).

The protein belongs to the peptidase S8 family. Homooligomer; forms a complex of 6 MDa probably composed of 40 subunits. Forms a structure consisting of 2 segmented and twisted strands that form a spindle-shaped structure. Each strand is composed of 10 segments (a segment being a homodimer oriented head to head), stacking of these segments leads to the formation of a twisted single strand. 2 strands compose the fully assembled spindle.

Its subcellular location is the cytoplasm. The catalysed reaction is Release of an N-terminal tripeptide from a polypeptide.. Its activity is regulated as follows. Inhibited by phenylmethanesulfonyl fluoride (PMSF) and butabindide, but not by peptidase inhibitor pepstatin, EDTA, nor bestatin. Its function is as follows. Component of the proteolytic cascade acting downstream of the 26S proteasome in the ubiquitin-proteasome pathway. Efficiently cleaves Ala-Ala-Ala-polypeptide and Pro-Pro-Ala-polypeptide, Val-Leu-Lys-polypeptide only at high concentration. Does not cleave Ala-Phe-Pro-polypeptide nor Pro-Leu-Gly-polypeptide. In Drosophila melanogaster (Fruit fly), this protein is Tripeptidyl-peptidase 2 (TppII).